Consider the following 201-residue polypeptide: LexA repressor (201 aa).

The segment at residues 28–48 (LREIGGHLGINGTLGVMKHLD) is a DNA-binding region (H-T-H motif). Catalysis depends on for autocatalytic cleavage activity residues S120 and K157.

Belongs to the peptidase S24 family. Homodimer.

The catalysed reaction is Hydrolysis of Ala-|-Gly bond in repressor LexA.. Represses a number of genes involved in the response to DNA damage (SOS response), including recA and lexA. In the presence of single-stranded DNA, RecA interacts with LexA causing an autocatalytic cleavage which disrupts the DNA-binding part of LexA, leading to derepression of the SOS regulon and eventually DNA repair. The sequence is that of LexA repressor from Geotalea uraniireducens (strain Rf4) (Geobacter uraniireducens).